We begin with the raw amino-acid sequence, 724 residues long: 1,4-alpha-glucan branching enzyme GlgB 1 (724 aa).

D403 functions as the Nucleophile in the catalytic mechanism. E456 acts as the Proton donor in catalysis.

The protein belongs to the glycosyl hydrolase 13 family. GlgB subfamily. Monomer.

The enzyme catalyses Transfers a segment of a (1-&gt;4)-alpha-D-glucan chain to a primary hydroxy group in a similar glucan chain.. The protein operates within glycan biosynthesis; glycogen biosynthesis. In terms of biological role, catalyzes the formation of the alpha-1,6-glucosidic linkages in glycogen by scission of a 1,4-alpha-linked oligosaccharide from growing alpha-1,4-glucan chains and the subsequent attachment of the oligosaccharide to the alpha-1,6 position. In Xanthomonas campestris pv. campestris (strain 8004), this protein is 1,4-alpha-glucan branching enzyme GlgB 1.